The primary structure comprises 424 residues: O-methyltransferase aunD (424 aa).

D275 provides a ligand contact to S-adenosyl-L-methionine. The active-site Proton acceptor is the H326.

This sequence belongs to the class I-like SAM-binding methyltransferase superfamily. Cation-independent O-methyltransferase family.

Its pathway is secondary metabolite biosynthesis. In terms of biological role, O-methyltransferase; part of the gene cluster that mediates the biosynthesis of aurasperone B, a dimeric gamma-naphthopyrone. The first step in the biosynthesis of aurasperone B is the production of gamma-naphthopyrone precursor YWA1 by the non-reducing polyketide synthase albA, via condensation of one acetyl-CoA starter unit with 6 malonyl-CoA units. YWA1 is then methylated by aunE at position C-6 to yield foncesin which is further methylated at position C-8 by aunD to produce fonsecin B. A key enzyme in the biosynthetic pathway is the cytochrome P450 monooxygenase aunB which catalyzes the oxidative dimerization of fonsecin B to aurasperone B. AunB also catalyzes the oxidative dimerization of rubrofusarin B into aurasperone A. The protein is O-methyltransferase aunD of Aspergillus niger (strain ATCC 1015 / CBS 113.46 / FGSC A1144 / LSHB Ac4 / NCTC 3858a / NRRL 328 / USDA 3528.7).